The chain runs to 273 residues: HTH-type transcriptional activator RhaS (273 aa).

An HTH araC/xylS-type domain is found at 174–272; it reads YQLLDWLQNN…SQSPRDLRSQ (99 aa). 2 consecutive DNA-binding regions (H-T-H motif) follow at residues 191 to 212 and 239 to 262; these read PELA…KNKT and VTDI…KREF.

Binds DNA as a dimer.

The protein localises to the cytoplasm. Activates expression of the rhaBAD and rhaT operons. The chain is HTH-type transcriptional activator RhaS from Yersinia pseudotuberculosis serotype I (strain IP32953).